Reading from the N-terminus, the 538-residue chain is CTP synthase (538 aa).

The amidoligase domain stretch occupies residues 1 to 266 (MKTKFIFVTG…DDQVVDKLNI (266 aa)). Residue serine 14 coordinates CTP. Position 14 (serine 14) interacts with UTP. Residues 15–20 (SIGKGL) and aspartate 72 contribute to the ATP site. Residues aspartate 72 and glutamate 140 each coordinate Mg(2+). CTP is bound by residues 147–149 (DIE), 187–192 (KTKPTQ), and lysine 223. UTP-binding positions include 187 to 192 (KTKPTQ) and lysine 223. The region spanning 292–534 (HIAIVGKYVN…IAAALEHRGK (243 aa)) is the Glutamine amidotransferase type-1 domain. Glycine 354 is a binding site for L-glutamine. The active-site Nucleophile; for glutamine hydrolysis is cysteine 381. L-glutamine contacts are provided by residues 382-385 (LGMQ), glutamate 405, and arginine 462. Active-site residues include histidine 507 and glutamate 509.

Belongs to the CTP synthase family. As to quaternary structure, homotetramer.

The enzyme catalyses UTP + L-glutamine + ATP + H2O = CTP + L-glutamate + ADP + phosphate + 2 H(+). It catalyses the reaction L-glutamine + H2O = L-glutamate + NH4(+). The catalysed reaction is UTP + NH4(+) + ATP = CTP + ADP + phosphate + 2 H(+). The protein operates within pyrimidine metabolism; CTP biosynthesis via de novo pathway; CTP from UDP: step 2/2. Allosterically activated by GTP, when glutamine is the substrate; GTP has no effect on the reaction when ammonia is the substrate. The allosteric effector GTP functions by stabilizing the protein conformation that binds the tetrahedral intermediate(s) formed during glutamine hydrolysis. Inhibited by the product CTP, via allosteric rather than competitive inhibition. Catalyzes the ATP-dependent amination of UTP to CTP with either L-glutamine or ammonia as the source of nitrogen. Regulates intracellular CTP levels through interactions with the four ribonucleotide triphosphates. The protein is CTP synthase of Geobacter metallireducens (strain ATCC 53774 / DSM 7210 / GS-15).